Consider the following 421-residue polypeptide: D-aspartate ligase (421 aa).

The ATP-grasp domain occupies 130 to 332 (YEVCEEYDLP…LARFVTEDRV (203 aa)). An ATP-binding site is contributed by 161 to 224 (PFEFPVALKP…QDFIPGDDSN (64 aa)). Mg(2+) contacts are provided by Asp-290, Glu-304, and Asn-306.

Mg(2+) is required as a cofactor.

The enzyme catalyses [beta-GlcNAc-(1-&gt;4)-Mur2Ac(oyl-L-Ala-gamma-D-Glu-L-Lys-D-Ala-D-Ala)](n) + n D-aspartate + n ATP = [beta-GlcNAc-(1-&gt;4)-Mur2Ac(oyl-L-Ala-gamma-D-Glu-6-N-(beta-D-Asp)-L-Lys-D-Ala-D-Ala)]n + n ADP + n phosphate + n H(+). The protein operates within cell wall biogenesis; peptidoglycan biosynthesis. Its function is as follows. Catalyzes the addition of D-aspartate onto the lysine residue in the peptidoglycan precursor UDP-MurNAc-pentapeptide. The ligation occurs between the beta-carboxylate of D-Asp and the epsilon-amino group of L-Lys. Is highly specific for D-aspartate, as L-aspartate, D-glutamate, D-alanine, D-iso-asparagine and D-malate are not substrates. This is D-aspartate ligase from Enterococcus faecium (strain Aus0004).